The following is a 156-amino-acid chain: Probable cyclic pyranopterin monophosphate synthase (156 aa).

Residues 73-75 (LCH) and 109-110 (ME) contribute to the substrate site. Aspartate 124 is an active-site residue.

Belongs to the MoaC family. In terms of assembly, homohexamer; trimer of dimers.

The catalysed reaction is (8S)-3',8-cyclo-7,8-dihydroguanosine 5'-triphosphate = cyclic pyranopterin phosphate + diphosphate. It participates in cofactor biosynthesis; molybdopterin biosynthesis. Catalyzes the conversion of (8S)-3',8-cyclo-7,8-dihydroguanosine 5'-triphosphate to cyclic pyranopterin monophosphate (cPMP). This is Probable cyclic pyranopterin monophosphate synthase from Pyrococcus furiosus (strain ATCC 43587 / DSM 3638 / JCM 8422 / Vc1).